A 255-amino-acid polypeptide reads, in one-letter code: uncharacterized protein (255 aa).

Positions 1–22 (MNILSPIIIIIILIVLFYVMRM) are cleaved as a signal peptide.

This is an uncharacterized protein from Acanthamoeba polyphaga (Amoeba).